The chain runs to 498 residues: Zinc finger protein 395 (498 aa).

A disordered region spans residues 129–165 (QKPLSSPIEQSLPTSPGATSTSAQRSVSRSIDVPKRR). Over residues 130–157 (KPLSSPIEQSLPTSPGATSTSAQRSVSR) the composition is skewed to polar residues. The Nuclear export signal motif lies at 171 to 180 (MDEMMAAMVL). The interval 209–245 (KEGGDVSDSGSSTTSGHWSASSGVSTPSPPHTDASPK) is disordered. Residues 214 to 231 (VSDSGSSTTSGHWSASSG) show a composition bias toward low complexity. The C2H2-type zinc finger occupies 285 to 310 (YKCLWPNCGKLLRSIVGIKRHVKTQH).

It is found in the cytoplasm. The protein localises to the nucleus. This Xenopus laevis (African clawed frog) protein is Zinc finger protein 395 (znf395).